Here is a 215-residue protein sequence, read N- to C-terminus: Riboflavin synthase (215 aa).

2 Lumazine-binding repeats span residues 1-96 (MFTG…FGGH) and 97-193 (IVSG…EQFL). 2,4-dihydroxypteridine is bound by residues 4–6 (GII), 47–49 (CLT), 61–66 (DVMSET), 100–102 (GHI), K135, 144–146 (SLT), and 158–163 (SIIPHT).

As to quaternary structure, homotrimer.

It carries out the reaction 2 6,7-dimethyl-8-(1-D-ribityl)lumazine + H(+) = 5-amino-6-(D-ribitylamino)uracil + riboflavin. It participates in cofactor biosynthesis; riboflavin biosynthesis; riboflavin from 2-hydroxy-3-oxobutyl phosphate and 5-amino-6-(D-ribitylamino)uracil: step 2/2. Its function is as follows. Catalyzes the dismutation of two molecules of 6,7-dimethyl-8-ribityllumazine, resulting in the formation of riboflavin and 5-amino-6-(D-ribitylamino)uracil. This chain is Riboflavin synthase (ribE), found in Actinobacillus pleuropneumoniae (Haemophilus pleuropneumoniae).